The following is a 135-amino-acid chain: S-protein homolog 20 (135 aa).

The N-terminal stretch at methionine 1–alanine 26 is a signal peptide. N-linked (GlcNAc...) asparagine glycosylation is present at asparagine 88.

This sequence belongs to the plant self-incompatibility (S1) protein family.

The protein resides in the secreted. In Arabidopsis thaliana (Mouse-ear cress), this protein is S-protein homolog 20.